Reading from the N-terminus, the 316-residue chain is UDP-N-acetylglucosamine transporter yea4 (316 aa).

The Cytoplasmic portion of the chain corresponds to 1–3 (MIA). Residues 4 to 24 (SALSFIFGGCCSNAYALEALV) traverse the membrane as a helical segment. The Lumenal portion of the chain corresponds to 25-31 (REFPSSG). A helical transmembrane segment spans residues 32-52 (ILITFSQFILITIEGLIYFLL). The Cytoplasmic segment spans residues 53-67 (NDVQSLKHPKVPRKR). A helical transmembrane segment spans residues 68–88 (WFVVVVMFFAINVLNNVALGF). The Lumenal portion of the chain corresponds to 89-120 (DISVPVHIILRSSGPLTTMAVGRILAGKRYSS). A helical transmembrane segment spans residues 121–141 (LQIGSVFILTIGVIIATLGNA). The Cytoplasmic segment spans residues 142–153 (KDLHLHVESMTR). The helical transmembrane segment at 154 to 174 (FGIGFTILVITQILGAIMGLV) threads the bilayer. The Lumenal portion of the chain corresponds to 175-187 (LENTYRIYGSDWR). The helical transmembrane segment at 188-208 (ESLFYTHALSLPFFLFLLRPI) threads the bilayer. Topologically, residues 209–214 (RSQWND) are cytoplasmic. Residues 215–235 (LFAIHTKGFLNLPSGVWYLCF) form a helical membrane-spanning segment. Topologically, residues 236–274 (NTLAQYFCVRGVNALGAETSALTVSVVLNVRKFVSLCLS) are lumenal. A helical transmembrane segment spans residues 275–295 (LILFENEMGPAVKFGALLVFG). Residues 296-316 (SSAVYASARSKPKTNGLKKND) are Cytoplasmic-facing.

It belongs to the nucleotide-sugar transporter family. SLC35B subfamily.

It is found in the endoplasmic reticulum. It localises to the endoplasmic reticulum membrane. In terms of biological role, sugar transporter that specifically mediates the transport of UDP-N-acetylglucosamine (UDP-GlcNAc) and is required for cell wall chitin synthesis. This Schizosaccharomyces pombe (strain 972 / ATCC 24843) (Fission yeast) protein is UDP-N-acetylglucosamine transporter yea4 (yea4).